A 316-amino-acid chain; its full sequence is Olfactory receptor 2K2 (316 aa).

At 1–20 (MQGENFTIWSIFFLEGFSQY) the chain is on the extracellular side. Asparagine 5 carries N-linked (GlcNAc...) asparagine glycosylation. Residues 21 to 41 (PGLEVVLFVFSLVMYLTTLLG) traverse the membrane as a helical segment. At 42 to 65 (NSTLILITILDSRLKTPMYLFLGN) the chain is on the cytoplasmic side. The chain crosses the membrane as a helical span at residues 66 to 86 (LSFMDICYTSASVPTLLVNLL). Over 87–97 (SSQKTIIFSGC) the chain is Extracellular. Cysteines 97 and 188 form a disulfide. Residues 98–118 (AVQMYLSLAMGSTECVLLAVM) form a helical membrane-spanning segment. The Cytoplasmic portion of the chain corresponds to 119-143 (AYDRYVAICNPLRYSIIMNRCVCAR). A helical transmembrane segment spans residues 144-164 (MATVSWVTGCLTALLETSFAL). Over 165–199 (QIPLCGNLIDHFTCEILAVLKLACTSSLLMNTIML) the chain is Extracellular. A helical membrane pass occupies residues 200–220 (VVSILLLPIPMLLVCISYIFI). Topologically, residues 221–238 (LSTILRITSAEGRNKAFS) are cytoplasmic. A helical membrane pass occupies residues 239-259 (TCGAHLTVVILYYGAALSMYL). Topologically, residues 260 to 270 (KPSSSNAQKID) are extracellular. Residues 271–291 (KIISLLYGVLTPMLNPIIYSL) form a helical membrane-spanning segment. Residues 292 to 316 (RNKEVKDAMKKLLGKITLHQTHEHL) are Cytoplasmic-facing.

Belongs to the G-protein coupled receptor 1 family.

The protein localises to the cell membrane. Functionally, odorant receptor. The polypeptide is Olfactory receptor 2K2 (OR2K2) (Homo sapiens (Human)).